Consider the following 92-residue polypeptide: Putative septation protein SpoVG (92 aa).

The protein belongs to the SpoVG family.

Could be involved in septation. The sequence is that of Putative septation protein SpoVG from Thermoanaerobacter pseudethanolicus (strain ATCC 33223 / 39E) (Clostridium thermohydrosulfuricum).